Consider the following 334-residue polypeptide: Ornithine carbamoyltransferase (334 aa).

Carbamoyl phosphate contacts are provided by residues Ser57–Thr60, Gln84, Arg108, and His135–Gln138. L-ornithine is bound by residues Asn168, Asp232, and Ser236–Met237. Residues Cys274–Leu275 and Arg321 each bind carbamoyl phosphate.

The protein belongs to the aspartate/ornithine carbamoyltransferase superfamily. OTCase family.

Its subcellular location is the cytoplasm. It catalyses the reaction carbamoyl phosphate + L-ornithine = L-citrulline + phosphate + H(+). It functions in the pathway amino-acid degradation; L-arginine degradation via ADI pathway; carbamoyl phosphate from L-arginine: step 2/2. In terms of biological role, reversibly catalyzes the transfer of the carbamoyl group from carbamoyl phosphate (CP) to the N(epsilon) atom of ornithine (ORN) to produce L-citrulline. This chain is Ornithine carbamoyltransferase, found in Haemophilus influenzae (strain PittGG).